We begin with the raw amino-acid sequence, 638 residues long: XK-related protein 6 (638 aa).

Disordered regions lie at residues 24–43 (VGSGEEDGEPGGGGCGGGDG) and 82–117 (RSAAAADGGDQPLQPPGAAGRHPPTPSAGRPQPASP). Gly residues predominate over residues 33-43 (PGGGGCGGGDG). 7 consecutive transmembrane segments (helical) span residues 127 to 147 (LWIVLALLVFFGDVGTDLWLA), 158 to 178 (CFGLTLFFVLVPSLLVQSLSF), 315 to 335 (TLPCVSSVTSLMSLAWVLASY), 369 to 389 (VISFALFASIFQLYFGIFVVV), 410 to 430 (WEEILFNMVVGIVYIFCWFNV), 439 to 459 (MFAYYTIVLTENAALTFLWYF), and 470 to 490 (AVPALCCVFVSFVAGITLMLL).

This sequence belongs to the XK family.

The protein localises to the cell membrane. The protein is XK-related protein 6 of Mus musculus (Mouse).